The primary structure comprises 524 residues: MPLLSLSWLGLGHTAASPWLLLLLVGASCLLAYILPQVYAVFENSRRLRRFPQPPPRNWLFGHLGLIQSSEEGLLYIQSLSRTFRDVCCWWVGPWHPVIRIFHPAFIKPVILAPASVAPKDRVFYRFLRPWLGDGLLLSTGDKWSRHRRMLTPAFHFNILKPYVKIFNDSTNIMHAKWQRLASQGSARLDMFEHISLMTLDSLQKCVFSFDSNCQEKPSEYITAILELSALVARRHQSLLLHVDLFYHLTRDGMRFRKACRLVHDFTDAVIRERRCTLPDQGGDDALKAKAKAKTLDFIDVLLLSKDEHGEALSDEDIRAEADTFMFGGHDTTASGLSWILYNLAKHPEYQERCRQEVRELLRDREPEEIEWDDLAQLPFLTMCIKESLRLHPPATAISRCCTQDIMLPDGRVIPKGVICRISIFGTHHNPAVWPDPEVYNPFRFDADNGKGRSPLAFIPFSAGPRNCIGQTFAMSEMKVALALTLLRFRVLPDDKEPRRKPELILRAEGGLWLRVEPLSAGAH.

The chain crosses the membrane as a helical span at residues 15 to 35 (AASPWLLLLLVGASCLLAYIL). Cysteine 468 lines the heme pocket.

This sequence belongs to the cytochrome P450 family. The cofactor is heme.

The protein localises to the endoplasmic reticulum membrane. The protein resides in the microsome membrane. The enzyme catalyses leukotriene B4 + reduced [NADPH--hemoprotein reductase] + O2 = 18-hydroxy-leukotriene B4 + oxidized [NADPH--hemoprotein reductase] + H2O + H(+). It carries out the reaction leukotriene B4 + reduced [NADPH--hemoprotein reductase] + O2 = 19-hydroxy-leukotriene B4 + oxidized [NADPH--hemoprotein reductase] + H2O + H(+). The protein operates within lipid metabolism; leukotriene B4 degradation. In terms of biological role, a cytochrome P450 monooxygenase involved in the metabolism of the pro-inflammatory lipid mediator leukotriene B4 (LTB4). Hydroxylates at the omega-1 and omega-2 positions LTB4. This oxidation step leads to LTB4 inactivation, which is postulated to be a crucial part of the resolution of inflammation. Mechanistically, uses molecular oxygen inserting one oxygen atom into a substrate, and reducing the second into a water molecule, with two electrons provided by NADPH via cytochrome P450 reductase (CPR; NADPH-ferrihemoprotein reductase). In Rattus norvegicus (Rat), this protein is Cytochrome P450 4F3.